A 185-amino-acid chain; its full sequence is Ribosome-recycling factor (185 aa).

It belongs to the RRF family.

The protein localises to the cytoplasm. In terms of biological role, responsible for the release of ribosomes from messenger RNA at the termination of protein biosynthesis. May increase the efficiency of translation by recycling ribosomes from one round of translation to another. The chain is Ribosome-recycling factor from Geobacter sulfurreducens (strain ATCC 51573 / DSM 12127 / PCA).